The chain runs to 201 residues: Prostamide/prostaglandin F synthase (201 aa).

This sequence belongs to the peroxiredoxin-like PRXL2 family. Prostamide/prostaglandin F synthase subfamily.

It localises to the cytoplasm. The protein localises to the cytosol. It carries out the reaction prostaglandin H2 + [thioredoxin]-dithiol = prostaglandin F2alpha + [thioredoxin]-disulfide. The catalysed reaction is prostamide F2alpha + [thioredoxin]-disulfide = prostamide H2 + [thioredoxin]-dithiol. Catalyzes the reduction of prostaglandin-ethanolamide H(2) (prostamide H(2)) to prostamide F(2alpha) with NADPH as proton donor. Also able to reduce prostaglandin H(2) to prostaglandin F(2alpha). This Danio rerio (Zebrafish) protein is Prostamide/prostaglandin F synthase (prxl2b).